The chain runs to 299 residues: Bifunctional protein FolD (299 aa).

Residues 168–170, S193, and I234 each bind NADP(+); that span reads GRS.

The protein belongs to the tetrahydrofolate dehydrogenase/cyclohydrolase family. In terms of assembly, homodimer.

The catalysed reaction is (6R)-5,10-methylene-5,6,7,8-tetrahydrofolate + NADP(+) = (6R)-5,10-methenyltetrahydrofolate + NADPH. The enzyme catalyses (6R)-5,10-methenyltetrahydrofolate + H2O = (6R)-10-formyltetrahydrofolate + H(+). Its pathway is one-carbon metabolism; tetrahydrofolate interconversion. Its function is as follows. Catalyzes the oxidation of 5,10-methylenetetrahydrofolate to 5,10-methenyltetrahydrofolate and then the hydrolysis of 5,10-methenyltetrahydrofolate to 10-formyltetrahydrofolate. This chain is Bifunctional protein FolD, found in Bartonella bacilliformis (strain ATCC 35685 / KC583 / Herrer 020/F12,63).